The sequence spans 124 residues: 14 kDa peptide of ubiquinol-cytochrome c2 oxidoreductase complex (124 aa).

The helical transmembrane segment at 85 to 102 (LGGFASGALLALALAGIF) threads the bilayer.

The protein resides in the cell inner membrane. Its function is as follows. Component of the ubiquinol-cytochrome c reductase complex (complex III or cytochrome b-c1 complex), which is a respiratory chain that generates an electrochemical potential coupled to ATP synthesis. In Cereibacter sphaeroides (Rhodobacter sphaeroides), this protein is 14 kDa peptide of ubiquinol-cytochrome c2 oxidoreductase complex.